The chain runs to 406 residues: Glycosyltransferase GlyE (406 aa).

A GT8 domain region spans residues 3–265; that stretch reads NTKRAVVFAG…SVILNEWFSK (263 aa). Residues 11–16 and 106–107 contribute to the UDP site; these read AGDYAY and DS. Residues Asp106, Asp108, and His227 each coordinate Mn(2+). Residue 227-233 coordinates UDP; sequence HYISQDK.

The protein in the N-terminal section; belongs to the glycosyltransferase 8 family. Requires Mn(2+) as cofactor.

It participates in protein modification; protein glycosylation. Involved in the polymorphic O-glycosylation of the serine-rich repeat protein PsrP. Catalyzes the third step in glycosylation of PsrP in this bacteria. Transfers galactose from UDP-galactose to the terminal glucose moiety of already-glycosylated PsrP (using the short substrate PsrP-GlcNAc-Glc). Has a very marked preference for PsrP substrate that has already been modified by GlcNAc and glucose. Has hydrolytic activity against UDP-galactose but none against UDP-glucose. Functionally, also catalyzes the fourth step in glycosylation of PsrP in this bacteria. Can transfer the sugar from UDP-galactose to the terminal sugar moiety of PsrP-GlcNAc-Glc-Glc and of PsrP-GlcNAc-Glc-Gal. The protein is Glycosyltransferase GlyE of Streptococcus pneumoniae serotype 4 (strain ATCC BAA-334 / TIGR4).